The primary structure comprises 346 residues: N-acetyl-gamma-glutamyl-phosphate reductase (346 aa).

The active site involves cysteine 150.

Belongs to the NAGSA dehydrogenase family. Type 1 subfamily.

It localises to the cytoplasm. The catalysed reaction is N-acetyl-L-glutamate 5-semialdehyde + phosphate + NADP(+) = N-acetyl-L-glutamyl 5-phosphate + NADPH + H(+). The protein operates within amino-acid biosynthesis; L-arginine biosynthesis; N(2)-acetyl-L-ornithine from L-glutamate: step 3/4. Its function is as follows. Catalyzes the NADPH-dependent reduction of N-acetyl-5-glutamyl phosphate to yield N-acetyl-L-glutamate 5-semialdehyde. In Brevibacillus brevis (strain 47 / JCM 6285 / NBRC 100599), this protein is N-acetyl-gamma-glutamyl-phosphate reductase.